A 292-amino-acid chain; its full sequence is Cyclin-dependent kinase A-2 (292 aa).

A Protein kinase domain is found at 4 to 286 (YEKVEKIGEG…ARAALEHEYF (283 aa)). ATP-binding positions include 10-18 (IGEGTYGVV) and K33. T14 carries the post-translational modification Phosphothreonine. Y15 is modified (phosphotyrosine). The active-site Proton acceptor is D126. T160 bears the Phosphothreonine mark.

It belongs to the protein kinase superfamily. CMGC Ser/Thr protein kinase family. CDC2/CDKX subfamily. Expressed in the dividing region of the root apex and in differentiated cells such as those in the sclerenchyma, pericycle and parenchyma of the central cylinder. Expressed in the intercalary meristem and the elongation zone of internodes.

It carries out the reaction L-seryl-[protein] + ATP = O-phospho-L-seryl-[protein] + ADP + H(+). The enzyme catalyses L-threonyl-[protein] + ATP = O-phospho-L-threonyl-[protein] + ADP + H(+). The catalysed reaction is [DNA-directed RNA polymerase] + ATP = phospho-[DNA-directed RNA polymerase] + ADP + H(+). The chain is Cyclin-dependent kinase A-2 (CDKA-2) from Oryza sativa subsp. japonica (Rice).